We begin with the raw amino-acid sequence, 907 residues long: Protein translocase subunit SecA (907 aa).

ATP is bound by residues Gln-87, 105-109 (GEGKT), and Asp-513. Residues 841–853 (EAQRRAQAEEAAR) show a composition bias toward basic and acidic residues. Residues 841-907 (EAQRRAQAEE…KYKQCHGQIN (67 aa)) form a disordered region. The span at 854–865 (RAQAQHASAQSQ) shows a compositional bias: low complexity. Over residues 872–887 (EGHHQPVVRDERKVGR) the composition is skewed to basic and acidic residues. 4 residues coordinate Zn(2+): Cys-891, Cys-893, Cys-902, and His-903.

This sequence belongs to the SecA family. Monomer and homodimer. Part of the essential Sec protein translocation apparatus which comprises SecA, SecYEG and auxiliary proteins SecDF-YajC and YidC. Zn(2+) serves as cofactor.

Its subcellular location is the cell inner membrane. The protein localises to the cytoplasm. It carries out the reaction ATP + H2O + cellular proteinSide 1 = ADP + phosphate + cellular proteinSide 2.. Functionally, part of the Sec protein translocase complex. Interacts with the SecYEG preprotein conducting channel. Has a central role in coupling the hydrolysis of ATP to the transfer of proteins into and across the cell membrane, serving both as a receptor for the preprotein-SecB complex and as an ATP-driven molecular motor driving the stepwise translocation of polypeptide chains across the membrane. The chain is Protein translocase subunit SecA from Vibrio vulnificus (strain YJ016).